The primary structure comprises 196 residues: Ribonuclease HII (196 aa).

The RNase H type-2 domain maps to 15-196 (YIVAGIDEAG…RKSFRYSCFI (182 aa)). 3 residues coordinate a divalent metal cation: Asp-21, Glu-22, and Asp-112.

Belongs to the RNase HII family. It depends on Mn(2+) as a cofactor. Mg(2+) serves as cofactor.

The protein localises to the cytoplasm. It catalyses the reaction Endonucleolytic cleavage to 5'-phosphomonoester.. In terms of biological role, endonuclease that specifically degrades the RNA of RNA-DNA hybrids. This is Ribonuclease HII from Rickettsia canadensis (strain McKiel).